A 206-amino-acid polypeptide reads, in one-letter code: Ribosomal RNA small subunit methyltransferase G (206 aa).

Residues Gly74, Leu79, Val125–Glu126, and Arg140 contribute to the S-adenosyl-L-methionine site.

The protein belongs to the methyltransferase superfamily. RNA methyltransferase RsmG family.

It localises to the cytoplasm. The catalysed reaction is guanosine(527) in 16S rRNA + S-adenosyl-L-methionine = N(7)-methylguanosine(527) in 16S rRNA + S-adenosyl-L-homocysteine. Functionally, specifically methylates the N7 position of guanine in position 527 of 16S rRNA. The polypeptide is Ribosomal RNA small subunit methyltransferase G (Shewanella frigidimarina (strain NCIMB 400)).